The chain runs to 590 residues: Pescadillo homolog (590 aa).

Positions 297-318 (AKADAGEEEEVEEEEEVEDDGL) are disordered. The span at 302–318 (GEEEEVEEEEEVEDDGL) shows a compositional bias: acidic residues. The BRCT domain maps to 337 to 446 (TAGQLFSNFT…KLLPVSEYAP (110 aa)). Residues 452 to 590 (AHLSPWGDAG…RKLNEKKEKR (139 aa)) form a disordered region. A compositionally biased stretch (acidic residues) spans 471–499 (DASDDDEDDEDIEVAPEDYDKDDEEEEAE). Residues 489–589 (YDKDDEEEEA…RRKLNEKKEK (101 aa)) are a coiled coil. Basic and acidic residues-rich tracts occupy residues 500-517 (AEAKQHQRELEAEAKGTK), 532-547 (DKMTKAEKQEEEDKKL), and 567-577 (NDKKSDREAEL).

This sequence belongs to the pescadillo family. Component of the NOP7 complex, composed of ERB1, NOP7 and YTM1. The complex is held together by ERB1, which interacts with NOP7 via its N-terminal domain and with YTM1 via a high-affinity interaction between the seven-bladed beta-propeller domains of the 2 proteins. The NOP7 complex associates with the 66S pre-ribosome.

The protein localises to the nucleus. Its subcellular location is the nucleolus. The protein resides in the nucleoplasm. Its function is as follows. Component of the NOP7 complex, which is required for maturation of the 25S and 5.8S ribosomal RNAs and formation of the 60S ribosome. The chain is Pescadillo homolog from Yarrowia lipolytica (strain CLIB 122 / E 150) (Yeast).